The sequence spans 495 residues: MTTDNAKAQLTSSSGGNIIVVSNRLPVTITKNSSTGQYEYAMSSGGLVTALEGLKKTYTFKWFGWPGLEIPDDEKDQVRKDLLEKFNAVPIFLSDEIADLHYNGFSNSILWPLFHYHPGEINFDENAWLAYNEANQTFTNEIAKTMNHNDLIWVHDYHLMLVPEMLRVKIHEKQLQNVKVGWFLHTPFPSSEIYRILPVRQEILKGVLSCDLVGFHTYDYARHFLSSVQRVLNVNTLPNGVEYQGRFVNVGAFPIGIDVDKFTDGLKKESVQKRIQQLKETFKGCKIIVGVDRLDYIKGVPQKLHAMEVFLNEHPEWRGKVVLVQVAVPSRGDVEEYQYLRSVVNELVGRINGQFGTVEFVPIHFMHKSIPFEELISLYAVSDVCLVSSTRDGMNLVSYEYIACQEEKKGSLILSEFTGAAQSLNGAIIVNPWNTDDLSDAINEALTLPDVKKEVNWEKLYKYISKYTSAFWGENFVHELYSTSSSSTSSSATKN.

The D-glucose 6-phosphate site is built by Tyr-102 and Asp-156. UDP is bound by residues Arg-293 and Lys-298. Arg-293 and Lys-298 together coordinate UDP-alpha-D-glucose. A D-glucose 6-phosphate-binding site is contributed by Arg-331. Residues Ile-370 and 396-400 (LVSYE) contribute to the UDP site. UDP-alpha-D-glucose contacts are provided by residues Ile-370 and 392–400 (DGMNLVSYE).

This sequence belongs to the glycosyltransferase 20 family. The trehalose synthase complex is composed of the two catalytic subunits TPS1 and TPS2 and at least one of the two regulatory subunits TPS3 or TSL1.

It is found in the cytoplasm. It catalyses the reaction D-glucose 6-phosphate + UDP-alpha-D-glucose = alpha,alpha-trehalose 6-phosphate + UDP + H(+). The protein operates within carbohydrate biosynthesis. Activated by fructose 6-phosphate. Inorganic phosphate inhibits the synthase activity in the complex, but activates the synthase activity in the free monomeric form. Its function is as follows. Synthase catalytic subunit of the trehalose synthase complex that catalyzes the production of trehalose from glucose-6-phosphate and UDP-alpha-D-glucose in a two step process. Can function independently of the complex. The chain is Alpha,alpha-trehalose-phosphate synthase [UDP-forming] 56 kDa subunit from Saccharomyces cerevisiae (strain ATCC 204508 / S288c) (Baker's yeast).